The following is a 383-amino-acid chain: GTP-binding protein 10 homolog (383 aa).

The Obg domain occupies 22 to 157; that stretch reads PTFLDTLRLA…RTVNLDLKLI (136 aa). Residues 158–353 form the OBG-type G domain; it reads ADVGLVGFPN…VKSQLRRTLV (196 aa). GTP is bound by residues 164–171, 211–215, and 287–290; these read GFPNAGKS, DLPGL, and NKMD.

The protein belongs to the TRAFAC class OBG-HflX-like GTPase superfamily. OBG GTPase family.

Its subcellular location is the nucleus. It localises to the nucleolus. In terms of biological role, may be involved in the ribosome maturation process. This Drosophila melanogaster (Fruit fly) protein is GTP-binding protein 10 homolog.